We begin with the raw amino-acid sequence, 272 residues long: 3',5'-cyclic adenosine monophosphate phosphodiesterase CpdA (272 aa).

Fe cation-binding residues include D21, H23, D63, N93, H161, H200, and H202. Residues H23, D63, and 93–94 each bind AMP; that span reads NH. AMP is bound at residue H202.

The protein belongs to the cyclic nucleotide phosphodiesterase class-III family. As to quaternary structure, monomer. A divalent metal cation serves as cofactor.

It carries out the reaction 3',5'-cyclic AMP + H2O = AMP + H(+). Activated by iron. Other divalent metal ions have no effect. In terms of biological role, hydrolyzes cAMP to 5'-AMP. Plays an important regulatory role in modulating the intracellular concentration of cAMP, thereby influencing cAMP-dependent processes. Specifically required for regulation of virulence factors. Can also hydrolyze cGMP, but cGMP is unlikely to be synthesized by P.aeruginosa and cAMP is probably the biologically relevant substrate for CpdA in vivo. This chain is 3',5'-cyclic adenosine monophosphate phosphodiesterase CpdA, found in Pseudomonas aeruginosa.